We begin with the raw amino-acid sequence, 657 residues long: Glycogen debranching enzyme (657 aa).

The Nucleophile role is filled by Asp-336. Glu-371 (proton donor) is an active-site residue. Residues 460-479 (ANGEENRDGTNNNHSFNHGI) form a disordered region.

The protein belongs to the glycosyl hydrolase 13 family.

It carries out the reaction Hydrolysis of (1-&gt;6)-alpha-D-glucosidic linkages to branches with degrees of polymerization of three or four glucose residues in limit dextrin.. The protein operates within glycan degradation; glycogen degradation. Its function is as follows. Removes maltotriose and maltotetraose chains that are attached by 1,6-alpha-linkage to the limit dextrin main chain, generating a debranched limit dextrin. The polypeptide is Glycogen debranching enzyme (Enterobacter sp. (strain 638)).